The primary structure comprises 440 residues: tRNA(Ile)-lysidine synthase (440 aa).

Position 29-34 (Ser-29–Ser-34) interacts with ATP.

Belongs to the tRNA(Ile)-lysidine synthase family.

Its subcellular location is the cytoplasm. It carries out the reaction cytidine(34) in tRNA(Ile2) + L-lysine + ATP = lysidine(34) in tRNA(Ile2) + AMP + diphosphate + H(+). Its function is as follows. Ligates lysine onto the cytidine present at position 34 of the AUA codon-specific tRNA(Ile) that contains the anticodon CAU, in an ATP-dependent manner. Cytidine is converted to lysidine, thus changing the amino acid specificity of the tRNA from methionine to isoleucine. The polypeptide is tRNA(Ile)-lysidine synthase (Pectobacterium atrosepticum (strain SCRI 1043 / ATCC BAA-672) (Erwinia carotovora subsp. atroseptica)).